A 577-amino-acid polypeptide reads, in one-letter code: Acyl-coenzyme A synthetase ACSM2B, mitochondrial (577 aa).

Residues 1-46 (MHWLRKVQGLCTLWGTQMSSRTLYINSRQLVSLQWGHQEVPAKFNF) constitute a mitochondrion transit peptide. Residue Q139 coordinates CoA. Residues 221 to 229 (TSGTSGLPK), 359 to 364 (EFYGQT), D446, and R461 contribute to the ATP site. Residue T364 coordinates substrate. 469–471 (SGY) is a binding site for CoA. R472 provides a ligand contact to substrate. Residue R501 participates in CoA binding. A Phosphoserine modification is found at S513. CoA contacts are provided by residues K532 and 540-542 (YPR). K557 contacts ATP.

The protein belongs to the ATP-dependent AMP-binding enzyme family. In terms of assembly, monomer. The cofactor is Mg(2+). It depends on Mn(2+) as a cofactor. In terms of tissue distribution, detected in liver.

It is found in the mitochondrion. The catalysed reaction is a medium-chain fatty acid + ATP + CoA = a medium-chain fatty acyl-CoA + AMP + diphosphate. It catalyses the reaction benzoate + ATP + CoA = benzoyl-CoA + AMP + diphosphate. The enzyme catalyses hexanoate + ATP + CoA = hexanoyl-CoA + AMP + diphosphate. It carries out the reaction butanoate + ATP + CoA = butanoyl-CoA + AMP + diphosphate. The catalysed reaction is octanoate + ATP + CoA = octanoyl-CoA + AMP + diphosphate. It catalyses the reaction decanoate + ATP + CoA = decanoyl-CoA + AMP + diphosphate. With respect to regulation, activated by monovalent cations, such as potassium, rubidium or ammonium. In terms of biological role, catalyzes the activation of fatty acids by CoA to produce an acyl-CoA, the first step in fatty acid metabolism. Capable of activating medium-chain fatty acids (e.g. butyric (C4) to decanoic (C10) acids), and certain carboxylate-containing xenobiotics, e.g. benzoate. This is Acyl-coenzyme A synthetase ACSM2B, mitochondrial (ACSM2B) from Homo sapiens (Human).